The following is a 1018-amino-acid chain: Contactin-1 (1018 aa).

The signal sequence occupies residues Met1–Ala20. 6 Ig-like C2-type domains span residues Pro41–Ser131, Pro137–Phe223, Pro241–Tyr326, Pro331–Lys407, Pro413–Val500, and Pro504–Arg601. 2 disulfides stabilise this stretch: Cys65–Cys114 and Cys158–Cys211. N-linked (GlcNAc...) asparagine glycans are attached at residues Asn208 and Asn258. Cys263 and Cys310 are joined by a disulfide. Residue Asn338 is glycosylated (N-linked (GlcNAc...) asparagine). 2 disulfides stabilise this stretch: Cys352–Cys391 and Cys436–Cys484. Residues Asn457 and Asn473 are each glycosylated (N-linked (GlcNAc...) asparagine). N-linked (GlcNAc...) (complex) asparagine glycosylation occurs at Asn494. A glycan (N-linked (GlcNAc...) asparagine) is linked at Asn521. Cysteines 526 and 583 form a disulfide. Asn591 carries N-linked (GlcNAc...) asparagine glycosylation. 4 Fibronectin type-III domains span residues Pro606–Ala704, Ala709–Asp806, Ala811–Ser906, and Gln907–Pro1000. The segment at Ser693 to Gly717 is disordered. A glycan (N-linked (GlcNAc...) asparagine) is linked at Asn933. Ser993 carries the GPI-anchor amidated serine lipid modification. The propeptide at Gly994 to Phe1018 is removed in mature form.

This sequence belongs to the immunoglobulin superfamily. Contactin family. Monomer. Interacts with CNTNAP1 in cis form. Binds to the carbonic-anhydrase like domain of PTPRZ1. Interacts with NOTCH1 and TNR. Detected in a complex with NRCAM and PTPRB. Interacts with TASOR. In terms of tissue distribution, strongly expressed in brain and in neuroblastoma and retinoblastoma cell lines. Lower levels of expression in lung, pancreas, kidney and skeletal muscle.

The protein resides in the cell membrane. In terms of biological role, contactins mediate cell surface interactions during nervous system development. Involved in the formation of paranodal axo-glial junctions in myelinated peripheral nerves and in the signaling between axons and myelinating glial cells via its association with CNTNAP1. Participates in oligodendrocytes generation by acting as a ligand of NOTCH1. Its association with NOTCH1 promotes NOTCH1 activation through the released notch intracellular domain (NICD) and subsequent translocation to the nucleus. Interaction with TNR induces a repulsion of neurons and an inhibition of neurite outgrowth. In Homo sapiens (Human), this protein is Contactin-1 (CNTN1).